Reading from the N-terminus, the 65-residue chain is Small ribosomal subunit protein bS21 (65 aa).

A disordered region spans residues 45–65; the sequence is GRLKRSRSRRRAQRANEERNS. Residues 48 to 57 are compositionally biased toward basic residues; it reads KRSRSRRRAQ.

Belongs to the bacterial ribosomal protein bS21 family.

The polypeptide is Small ribosomal subunit protein bS21 (Pelodictyon phaeoclathratiforme (strain DSM 5477 / BU-1)).